Reading from the N-terminus, the 26-residue chain is Probable early E4 17 kDa protein (26 aa).

The sequence is that of Probable early E4 17 kDa protein from Homo sapiens (Human).